We begin with the raw amino-acid sequence, 198 residues long: ATP-dependent Clp protease proteolytic subunit (198 aa).

The active-site Nucleophile is serine 98. Histidine 123 is a catalytic residue.

It belongs to the peptidase S14 family. In terms of assembly, fourteen ClpP subunits assemble into 2 heptameric rings which stack back to back to give a disk-like structure with a central cavity, resembling the structure of eukaryotic proteasomes.

It localises to the cytoplasm. The catalysed reaction is Hydrolysis of proteins to small peptides in the presence of ATP and magnesium. alpha-casein is the usual test substrate. In the absence of ATP, only oligopeptides shorter than five residues are hydrolyzed (such as succinyl-Leu-Tyr-|-NHMec, and Leu-Tyr-Leu-|-Tyr-Trp, in which cleavage of the -Tyr-|-Leu- and -Tyr-|-Trp bonds also occurs).. Functionally, cleaves peptides in various proteins in a process that requires ATP hydrolysis. Has a chymotrypsin-like activity. Plays a major role in the degradation of misfolded proteins. This chain is ATP-dependent Clp protease proteolytic subunit, found in Bacillus pumilus (strain SAFR-032).